The sequence spans 230 residues: Leucyl/phenylalanyl-tRNA--protein transferase (230 aa).

This sequence belongs to the L/F-transferase family.

The protein localises to the cytoplasm. It catalyses the reaction N-terminal L-lysyl-[protein] + L-leucyl-tRNA(Leu) = N-terminal L-leucyl-L-lysyl-[protein] + tRNA(Leu) + H(+). The catalysed reaction is N-terminal L-arginyl-[protein] + L-leucyl-tRNA(Leu) = N-terminal L-leucyl-L-arginyl-[protein] + tRNA(Leu) + H(+). The enzyme catalyses L-phenylalanyl-tRNA(Phe) + an N-terminal L-alpha-aminoacyl-[protein] = an N-terminal L-phenylalanyl-L-alpha-aminoacyl-[protein] + tRNA(Phe). Functionally, functions in the N-end rule pathway of protein degradation where it conjugates Leu, Phe and, less efficiently, Met from aminoacyl-tRNAs to the N-termini of proteins containing an N-terminal arginine or lysine. This is Leucyl/phenylalanyl-tRNA--protein transferase from Rhodopseudomonas palustris (strain BisB18).